Here is a 584-residue protein sequence, read N- to C-terminus: DNA damage-binding protein 2 (584 aa).

The segment at 1–87 (MGPTTRARFV…PVAAAARSGR (87 aa)) is disordered. A compositionally biased stretch (basic residues) spans 8–20 (RFVHNRRRRRRRG). Composition is skewed to acidic residues over residues 25–35 (PDDDDEEEDQQ) and 45–66 (DEGE…DGEA). The segment at 122-140 (KPCFLCKMPGGHTTLTCPH) adopts a CCHC-type zinc-finger fold. 7 WD repeats span residues 192-232 (FHQR…EKIT), 236-278 (VHSC…SLLN), 288-327 (STWR…RIGD), 333-373 (KKGS…PNSA), 378-418 (AHGR…LESP), 438-481 (EWDP…LAEV), and 484-523 (PDIT…DATE). A DWD box motif is present at residues 351 to 366 (LLSSGNDHYARIWDTR). Residues 517–532 (TESDATEERNREKAKE) show a composition bias toward basic and acidic residues. The interval 517–584 (TESDATEERN…TIKGKGKSKV (68 aa)) is disordered. Residues 562 to 584 (KKKKKAKKTRFTHTIKGKGKSKV) show a composition bias toward basic residues.

Belongs to the WD repeat DDB2/WDR76 family. In terms of assembly, component of the UV-DDB complex, which is composed of DDB1 and DDB2. Expressed in proliferating tissues such as shoot apical meristem (SAM), root tips and young leaves. Not detected in mature leaves.

It localises to the nucleus. In terms of biological role, required for DNA repair. Binds to DDB1 to form the UV-damaged DNA-binding protein complex (the UV-DDB complex). The UV-DDB complex may recognize UV-induced DNA damage and recruit proteins of the nucleotide excision repair pathway (the NER pathway) to initiate DNA repair. May function as the substrate recognition module for a DCX (DDB1-CUL4-X-box) E3 ubiquitin-protein ligase complex. The polypeptide is DNA damage-binding protein 2 (Oryza sativa subsp. japonica (Rice)).